Here is a 206-residue protein sequence, read N- to C-terminus: Holliday junction branch migration complex subunit RuvA (206 aa).

Positions 1 to 64 (MIGKLKGTLD…EDMLRLYGFQ (64 aa)) are domain I. Residues 65–144 (SALEREWFRL…AYAGAASGTI (80 aa)) are domain II. The interval 145–154 (GLKQELGEGV) is flexible linker. A domain III region spans residues 154-206 (VAPAPITDAVSALVNLGYSRDTAANAVAAALKTAGEDADASKLIRFGLKELAR).

Belongs to the RuvA family. As to quaternary structure, homotetramer. Forms an RuvA(8)-RuvB(12)-Holliday junction (HJ) complex. HJ DNA is sandwiched between 2 RuvA tetramers; dsDNA enters through RuvA and exits via RuvB. An RuvB hexamer assembles on each DNA strand where it exits the tetramer. Each RuvB hexamer is contacted by two RuvA subunits (via domain III) on 2 adjacent RuvB subunits; this complex drives branch migration. In the full resolvosome a probable DNA-RuvA(4)-RuvB(12)-RuvC(2) complex forms which resolves the HJ.

Its subcellular location is the cytoplasm. The RuvA-RuvB-RuvC complex processes Holliday junction (HJ) DNA during genetic recombination and DNA repair, while the RuvA-RuvB complex plays an important role in the rescue of blocked DNA replication forks via replication fork reversal (RFR). RuvA specifically binds to HJ cruciform DNA, conferring on it an open structure. The RuvB hexamer acts as an ATP-dependent pump, pulling dsDNA into and through the RuvAB complex. HJ branch migration allows RuvC to scan DNA until it finds its consensus sequence, where it cleaves and resolves the cruciform DNA. The protein is Holliday junction branch migration complex subunit RuvA of Mesorhizobium japonicum (strain LMG 29417 / CECT 9101 / MAFF 303099) (Mesorhizobium loti (strain MAFF 303099)).